A 199-amino-acid polypeptide reads, in one-letter code: dTTP/UTP pyrophosphatase (199 aa).

Residue D73 is the Proton acceptor of the active site.

It belongs to the Maf family. YhdE subfamily. A divalent metal cation serves as cofactor.

It is found in the cytoplasm. It carries out the reaction dTTP + H2O = dTMP + diphosphate + H(+). The enzyme catalyses UTP + H2O = UMP + diphosphate + H(+). Functionally, nucleoside triphosphate pyrophosphatase that hydrolyzes dTTP and UTP. May have a dual role in cell division arrest and in preventing the incorporation of modified nucleotides into cellular nucleic acids. The sequence is that of dTTP/UTP pyrophosphatase from Caldicellulosiruptor saccharolyticus (strain ATCC 43494 / DSM 8903 / Tp8T 6331).